Reading from the N-terminus, the 94-residue chain is MLKLNLQFFASKKGVSSTKNGRDSESKRLGAKRADGQYVTGGSILYRQRGTKIYPGENVGRGGDDTLFAKIDGVVRFERKGRDKKQVSVYAVAE.

A propeptide spanning residues 1–9 (MLKLNLQFF) is cleaved from the precursor.

This sequence belongs to the bacterial ribosomal protein bL27 family. The N-terminus is cleaved by ribosomal processing cysteine protease Prp.

The protein is Large ribosomal subunit protein bL27 of Staphylococcus haemolyticus (strain JCSC1435).